A 401-amino-acid chain; its full sequence is 3-hydroxyisobutyryl-CoA hydrolase-like protein 1, mitochondrial (401 aa).

The transit peptide at 1–26 (MHNAKGLLGRIVRDKLWRFGYRRSLC) directs the protein to the mitochondrion.

This sequence belongs to the enoyl-CoA hydratase/isomerase family.

It is found in the mitochondrion. The polypeptide is 3-hydroxyisobutyryl-CoA hydrolase-like protein 1, mitochondrial (Arabidopsis thaliana (Mouse-ear cress)).